Here is a 949-residue protein sequence, read N- to C-terminus: Piwi-like protein 2 (949 aa).

The tract at residues 1-125 (MDPTRPPFRG…SLSTRVQQAS (125 aa)) is disordered. Over residues 115–125 (PSLSTRVQQAS) the composition is skewed to polar residues. The PAZ domain occupies 366–478 (SVLDIMNILY…LLPELAFMTG (113 aa)). The region spanning 644–935 (LLVCLISGTR…LAFLSGQFLH (292 aa)) is the Piwi domain. Active-site residues include D721, E759, D791, and H924.

It belongs to the argonaute family. Piwi subfamily. Component of the PET complex. Mg(2+) is required as a cofactor. Methylated on arginine residues; required for the interaction with Tudor domain-containing protein and subsequent localization to the meiotic nuage, also named P granule. Expressed in oocytes, testis and liver (at protein level).

The protein resides in the cytoplasm. It is found in the nucleus. Functionally, endoribonuclease that plays a central role during spermatogenesis by repressing transposable elements and preventing their mobilization, which is essential for the germline integrity. Plays an essential role in meiotic differentiation of spermatocytes, germ cell differentiation and in self-renewal of spermatogonial stem cells. Acts via the piRNA metabolic process, which mediates the repression of transposable elements during meiosis by forming complexes composed of piRNAs and Piwi proteins and govern the methylation and subsequent repression of transposons. During piRNA biosynthesis, plays a key role in the piRNA amplification loop, also named ping-pong amplification cycle, by acting as a 'slicer-competent' piRNA endoribonuclease that cleaves primary piRNAs, which are then loaded onto 'slicer-incompetent' piwil4. Piwil2 slicing produces a pre-miRNA intermediate, which is then processed in mature piRNAs, and as well as a 16 nucleotide by-product that is degraded. Required for piwil4/miwi2 nuclear localization and association with secondary piRNAs antisense. Represses circadian rhythms by promoting the stability and activity of core clock components BMAL1 and CLOCK. In Xenopus tropicalis (Western clawed frog), this protein is Piwi-like protein 2 (piwil2).